Consider the following 49-residue polypeptide: IDHRCGREATPPGKLCNDGRCCSQWGWCGTTQAYCSGKCQSQCDCNRDL.

A Chitin-binding type-1 domain is found at 2 to 45 (DHRCGREATPPGKLCNDGRCCSQWGWCGTTQAYCSGKCQSQCDC). 4 disulfide bridges follow: Cys-5–Cys-22, Cys-16–Cys-28, Cys-21–Cys-35, and Cys-39–Cys-43.

As to quaternary structure, homodimer; disulfide-linked.

Its function is as follows. Chitin-binding lectin which is specific for N-acetylglucosamine oligomers. The polypeptide is Chitin-binding lectin (Viscum album (European mistletoe)).